Here is a 479-residue protein sequence, read N- to C-terminus: PTS system sucrose-specific EIIBC component (479 aa).

Residues 4–87 form the PTS EIIB type-1 domain; that stretch reads PAVAKELLTL…AKLTGMSEMS (84 aa). The active-site Phosphocysteine intermediate; for EIIB activity is the cysteine 26. 11 helical membrane passes run 112-132, 158-178, 182-202, 204-224, 232-252, 264-284, 303-323, 345-365, 376-396, 403-423, and 448-468; these read IFVPIIPAIVAGGLLMGIYNL, MINTFANAPFVYLPILLAFSA, FGGNPYLGAALGMLMVHPDLL, GWGFGGASVSGNIPVWNILGF, QGSVLPVLVSAFILAKVELGL, LTPLLAIFIAGLLTFTVVGPF, AGFVGGAVFGLIYAPFVITGM, FIFPIAAMSNVSQGAAALAVG, IAIPSGVTGLLGITEPAMFGV, PFIAAVCAAALSSAFITMFNV, and IAGMVIAFLTAFVLTIVLGIG. In terms of domain architecture, PTS EIIC type-1 spans 120-477; it reads IVAGGLLMGI…GDRAKVGKKA (358 aa).

Its subcellular location is the cell inner membrane. It catalyses the reaction N(pros)-phospho-L-histidyl-[protein](out) + sucrose = sucrose 6(G)-phosphate(in) + L-histidyl-[protein]. Its function is as follows. The phosphoenolpyruvate-dependent sugar phosphotransferase system (sugar PTS), a major carbohydrate active transport system, catalyzes the phosphorylation of incoming sugar substrates concomitantly with their translocation across the cell membrane. This system is involved in sucrose transport. The sequence is that of PTS system sucrose-specific EIIBC component from Vibrio alginolyticus.